The chain runs to 188 residues: Putative manganese efflux pump MntP (188 aa).

A run of 6 helical transmembrane segments spans residues 3–23 (ISATILLAFGMSMDAFAASIG), 41–61 (LIFGAIETLTPLIGWSLGMLA), 62–82 (SQFILEWNHWIAFTLLVFLGG), 106–128 (WILVTTAIATSLDAMAVGVGLAF), 143–163 (ATLIMSTIGMMVGRFIGPLLG), and 168–188 (ILGGIVLIGIGGQILWSHFAG).

This sequence belongs to the MntP (TC 9.B.29) family.

Its subcellular location is the cell inner membrane. Probably functions as a manganese efflux pump. In Enterobacter sp. (strain 638), this protein is Putative manganese efflux pump MntP.